The chain runs to 268 residues: Sterol uptake protein 2 (268 aa).

Belongs to the SUT1 family.

Its subcellular location is the nucleus. Putative transcription factor involved in the regulation of the activity of the cAMP/protein kinase A pathway. Involved in sterol uptake. With SUT1, positively regulates mating by repressing the expression of the mating inhibitors NCE102, PRR2 and RHO5 in response to pheromone. This is Sterol uptake protein 2 from Saccharomyces cerevisiae (strain ATCC 204508 / S288c) (Baker's yeast).